A 198-amino-acid polypeptide reads, in one-letter code: Thymidylate kinase (198 aa).

Gly10 to Thr17 contributes to the ATP binding site.

It belongs to the thymidylate kinase family.

The catalysed reaction is dTMP + ATP = dTDP + ADP. Functionally, phosphorylation of dTMP to form dTDP in both de novo and salvage pathways of dTTP synthesis. The protein is Thymidylate kinase of Thermus thermophilus (strain ATCC BAA-163 / DSM 7039 / HB27).